The primary structure comprises 588 residues: uncharacterized protein (588 aa).

Helical transmembrane passes span 14–34, 49–69, 78–98, 184–204, 235–255, 257–274, and 275–292; these read FLLF…KGIV, AVIL…IVSA, IFLC…GILG, ALVV…LVAI, VPIA…AVIG, VISS…SYQE, and SSFY…SIYD. S486 is subject to Phosphoserine. The interval 566–588 is disordered; the sequence is RKGSVNGSDQESQKGVSRNVDIV. Positions 570–581 are enriched in polar residues; it reads VNGSDQESQKGV.

It is found in the membrane. This is an uncharacterized protein from Arabidopsis thaliana (Mouse-ear cress).